An 85-amino-acid chain; its full sequence is Protein BTH_I0359 (85 aa).

This Burkholderia thailandensis (strain ATCC 700388 / DSM 13276 / CCUG 48851 / CIP 106301 / E264) protein is Protein BTH_I0359.